A 396-amino-acid chain; its full sequence is Metallophosphoesterase 1 (396 aa).

The helical transmembrane segment at 28–48 (TVVIISVLLFCEYFIYYLVLF) threads the bilayer. Aspartate 75, aspartate 117, asparagine 155, histidine 249, histidine 303, and histidine 305 together coordinate a divalent metal cation. A helical transmembrane segment spans residues 356 to 376 (TVLTMYGAAAGFLMILILVHF).

This sequence belongs to the metallophosphoesterase superfamily. MPPE1 family. As to quaternary structure, interacts with GPI-anchor proteins (via the GPI portion). Interacts with TMED10. Mn(2+) is required as a cofactor.

The protein localises to the endoplasmic reticulum-Golgi intermediate compartment membrane. Metallophosphoesterase that catalyzes the removal of a side-chain ethanolamine-phosphate (EtNP) from the second mannose of the GPI-anchor protein intermediate. Participates in the glycan remodeling steps of GPI-anchor maturation to allow an efficient transport of GPI-anchor proteins from the endoplasmic reticulum to the Golgi. In Mus musculus (Mouse), this protein is Metallophosphoesterase 1.